A 157-amino-acid polypeptide reads, in one-letter code: Protein Smg homolog (157 aa).

It belongs to the Smg family.

In Shewanella sediminis (strain HAW-EB3), this protein is Protein Smg homolog.